A 243-amino-acid polypeptide reads, in one-letter code: 6-carboxyhexanoate--CoA ligase (243 aa).

It belongs to the BioW family. Homodimer. Requires Mg(2+) as cofactor.

The catalysed reaction is heptanedioate + ATP + CoA = 6-carboxyhexanoyl-CoA + AMP + diphosphate. It participates in metabolic intermediate metabolism; pimeloyl-CoA biosynthesis; pimeloyl-CoA from pimelate: step 1/1. Its function is as follows. Catalyzes the transformation of pimelate into pimeloyl-CoA with concomitant hydrolysis of ATP to AMP. This chain is 6-carboxyhexanoate--CoA ligase, found in Thermocrinis albus (strain DSM 14484 / JCM 11386 / HI 11/12).